A 249-amino-acid polypeptide reads, in one-letter code: Large ribosomal subunit protein uL1 (249 aa).

The protein belongs to the universal ribosomal protein uL1 family. In terms of assembly, part of the 50S ribosomal subunit.

Binds directly to 23S rRNA. The L1 stalk is quite mobile in the ribosome, and is involved in E site tRNA release. In terms of biological role, protein L1 is also a translational repressor protein, it controls the translation of the L11 operon by binding to its mRNA. In Orientia tsutsugamushi (strain Ikeda) (Rickettsia tsutsugamushi), this protein is Large ribosomal subunit protein uL1.